The chain runs to 328 residues: Ribosomal RNA small subunit methyltransferase H (328 aa).

S-adenosyl-L-methionine contacts are provided by residues 35-37 (GSH), aspartate 60, phenylalanine 87, aspartate 113, and glutamine 120.

The protein belongs to the methyltransferase superfamily. RsmH family.

The protein localises to the cytoplasm. It carries out the reaction cytidine(1402) in 16S rRNA + S-adenosyl-L-methionine = N(4)-methylcytidine(1402) in 16S rRNA + S-adenosyl-L-homocysteine + H(+). In terms of biological role, specifically methylates the N4 position of cytidine in position 1402 (C1402) of 16S rRNA. This chain is Ribosomal RNA small subunit methyltransferase H, found in Chlorobium chlorochromatii (strain CaD3).